A 241-amino-acid chain; its full sequence is Tumor necrosis factor receptor superfamily member 18 (241 aa).

An N-terminal signal peptide occupies residues 1 to 25 (MAQHGAMGAFRALCGLALLCALSLG). Topologically, residues 26–162 (QRPTGGPGCG…CVPGSPPAEP (137 aa)) are extracellular. Cystine bridges form between Cys34-Cys49, Cys74-Cys86, Cys81-Cys94, Cys115-Cys134, and Cys128-Cys153. TNFR-Cys repeat units follow at residues 34 to 72 (CGPG…EWDC), 74 to 112 (CVQP…GFQC), and 115 to 153 (CASG…NAVC). A glycan (N-linked (GlcNAc...) asparagine) is linked at Asn146. The helical transmembrane segment at 163-183 (LGWLTVVLLAVAACVLLLTSA) threads the bilayer. Over 184-241 (QLGLHIWQLRSQCMWPRETQLLLEVPPSTEDARSCQFPEEERGERSAEEKGRLGDLWV) the chain is Cytoplasmic. The disordered stretch occupies residues 214 to 241 (DARSCQFPEEERGERSAEEKGRLGDLWV). The segment covering 222–241 (EEERGERSAEEKGRLGDLWV) has biased composition (basic and acidic residues).

Binds to TRAF1, TRAF2, and TRAF3, but not TRAF5 and TRAF6. Binds through its C-terminus to SIVA1/SIVA. In terms of tissue distribution, expressed in lymph node, peripheral blood leukocytes and weakly in spleen.

The protein resides in the cell membrane. The protein localises to the secreted. Receptor for TNFSF18. Seems to be involved in interactions between activated T-lymphocytes and endothelial cells and in the regulation of T-cell receptor-mediated cell death. Mediated NF-kappa-B activation via the TRAF2/NIK pathway. This is Tumor necrosis factor receptor superfamily member 18 (TNFRSF18) from Homo sapiens (Human).